A 61-amino-acid chain; its full sequence is Large ribosomal subunit protein uL30 (61 aa).

Belongs to the universal ribosomal protein uL30 family. As to quaternary structure, part of the 50S ribosomal subunit.

This is Large ribosomal subunit protein uL30 from Laribacter hongkongensis (strain HLHK9).